We begin with the raw amino-acid sequence, 310 residues long: Olfactory receptor 2A7 (310 aa).

Over 1–24 (MGNNMTLITEFILLGFPLSPRMQM) the chain is Extracellular. A glycan (N-linked (GlcNAc...) asparagine) is linked at Asn-4. A helical transmembrane segment spans residues 25-45 (LLFALFSLFYAFTLLGNGTIV). Residues 46–53 (GLICLDSR) are Cytoplasmic-facing. Residues 54-74 (LHTPMYFFLSHLAIVDIAYAC) form a helical membrane-spanning segment. Residues 75–96 (NTVPQMLVNLLDPVKPISYAGC) are Extracellular-facing. Cys-96 and Cys-178 form a disulfide bridge. Residues 97 to 117 (MTQTFLFLTFAITECLLLVVM) traverse the membrane as a helical segment. Residues 118–148 (SYDRYVAICHPLRYSAIMSWRVCSTMAVTSW) lie on the Cytoplasmic side of the membrane. Residues 149-169 (IIGVLLSLIHLVLLLPLPFCV) traverse the membrane as a helical segment. The Extracellular segment spans residues 170–204 (SQKVNHFFCEITAILKLACADTHLNETMVLAGAVS). The N-linked (GlcNAc...) asparagine glycan is linked to Asn-194. Residues 205-225 (VLVGPFSSIVVSYACILGAIL) traverse the membrane as a helical segment. The Cytoplasmic segment spans residues 226 to 239 (KIQSEEGQRKAFST). Residues 240-260 (CSSHLCVVGLFYGTAIVMYVG) traverse the membrane as a helical segment. Residues 261–273 (PRHGSPKEQKKYL) are Extracellular-facing. Residues 274-291 (LLFHSLFNPMLNPLIYSL) form a helical membrane-spanning segment. Residues 292–310 (RNSDVKNTLKRVLRTQRAL) are Cytoplasmic-facing.

The protein belongs to the G-protein coupled receptor 1 family. Olfactory epithelium.

The protein localises to the cell membrane. In terms of biological role, odorant receptor. The protein is Olfactory receptor 2A7 of Mus musculus (Mouse).